The primary structure comprises 292 residues: Glutamyl-Q tRNA(Asp) synthetase (292 aa).

L-glutamate contacts are provided by residues 11–15 and glutamate 47; that span reads RFAPS. The short motif at 14-24 is the 'HIGH' region element; the sequence is PSPTGPLHFGS. Residues cysteine 103, cysteine 105, tyrosine 116, and cysteine 120 each contribute to the Zn(2+) site. Positions 173 and 191 each coordinate L-glutamate. The 'KMSKS' region motif lies at 229–233; it reads KLSKQ. Position 232 (lysine 232) interacts with ATP.

It belongs to the class-I aminoacyl-tRNA synthetase family. GluQ subfamily. Zn(2+) serves as cofactor.

Its function is as follows. Catalyzes the tRNA-independent activation of glutamate in presence of ATP and the subsequent transfer of glutamate onto a tRNA(Asp). Glutamate is transferred on the 2-amino-5-(4,5-dihydroxy-2-cyclopenten-1-yl) moiety of the queuosine in the wobble position of the QUC anticodon. The sequence is that of Glutamyl-Q tRNA(Asp) synthetase from Acinetobacter baylyi (strain ATCC 33305 / BD413 / ADP1).